Reading from the N-terminus, the 551-residue chain is Chitinase (551 aa).

The signal sequence occupies residues Met-1–Ala-17. The tract at residues Met-1–Ile-149 is chitin binding domain (CBD). The region spanning Lys-148–Lys-548 is the GH18 domain. Asn-173 is a glycosylation site (N-linked (GlcNAc...) asparagine; by host). Residue Glu-305 is the Proton donor of the active site. The N-linked (GlcNAc...) asparagine; by host glycan is linked to Asn-444. The short motif at Lys-548–Leu-551 is the Prevents secretion from ER element.

The protein belongs to the glycosyl hydrolase 18 family. Chitinase class II subfamily. Interacts with host VCATH.

It localises to the host endoplasmic reticulum lumen. The enzyme catalyses Random endo-hydrolysis of N-acetyl-beta-D-glucosaminide (1-&gt;4)-beta-linkages in chitin and chitodextrins.. Functionally, plays a role in host liquefaction to facilitate horizontal transmission of the virus by hydrolyzing beta-chitin and by regulating the cysteine protease VCATH. Localized in the host reticulum endoplasmic via its KDEL motif, interacts with and thus prevents VCATH secretion before host cell lysis occurs. This is Chitinase (CHIA) from Lepidoptera (butterflies and moths).